A 379-amino-acid chain; its full sequence is MSSVPARRGDAHIDFARSPRPTIGVEWEFALVDAQTRDLSNEATAVIAEIGENPRVHKELLRNTVEVVSGICRTVPEAMEDLRQTLGPARRIVRDRGMELFCAGAHPFAQWTTQKLTDAPRYAELIKRTQWWGRQMLIWGVHVHVGISSPNKVMPIMTSLLNYYPHLLALSASSPWWTGVDTGYASNRAMMFQQLPTAGLPFQFQTWAEFEGFVYDQKKTGIIDHVDEVRWDIRPSPHLGTLEMRICDGVSNLHELAALVALTHCLVVDLDRRLEADESLPTMPPWHHQENKWRAARYGLDAVIILDADSNERLVTEDLDDVLNRLEPVARKLQCADELAAVADIPRHGASYQRQRRVAEEHDGDLRAVVDALVAELEI.

It belongs to the glutamate--cysteine ligase type 2 family. YbdK subfamily.

It catalyses the reaction L-cysteine + L-glutamate + ATP = gamma-L-glutamyl-L-cysteine + ADP + phosphate + H(+). In terms of biological role, ATP-dependent carboxylate-amine ligase which exhibits weak glutamate--cysteine ligase activity. The protein is Putative glutamate--cysteine ligase 2 of Mycobacterium avium (strain 104).